Here is a 181-residue protein sequence, read N- to C-terminus: Inorganic pyrophosphatase (181 aa).

Residues lysine 16, arginine 30, and tyrosine 42 each coordinate substrate. 3 residues coordinate Mg(2+): aspartate 52, aspartate 57, and aspartate 89. Tyrosine 126 lines the substrate pocket.

The protein belongs to the PPase family. Homohexamer. It depends on Mg(2+) as a cofactor.

The protein resides in the cytoplasm. It catalyses the reaction diphosphate + H2O = 2 phosphate + H(+). In terms of biological role, catalyzes the hydrolysis of inorganic pyrophosphate (PPi) forming two phosphate ions. The chain is Inorganic pyrophosphatase from Ureaplasma parvum serovar 3 (strain ATCC 700970).